We begin with the raw amino-acid sequence, 246 residues long: 5-oxoprolinase subunit A (246 aa).

The protein belongs to the LamB/PxpA family. As to quaternary structure, forms a complex composed of PxpA, PxpB and PxpC.

The catalysed reaction is 5-oxo-L-proline + ATP + 2 H2O = L-glutamate + ADP + phosphate + H(+). Its function is as follows. Catalyzes the cleavage of 5-oxoproline to form L-glutamate coupled to the hydrolysis of ATP to ADP and inorganic phosphate. The sequence is that of 5-oxoprolinase subunit A from Vibrio cholerae serotype O1 (strain M66-2).